A 101-amino-acid chain; its full sequence is Small ribosomal subunit protein uS14 (101 aa).

The protein belongs to the universal ribosomal protein uS14 family. Part of the 30S ribosomal subunit. Contacts proteins S3 and S10.

In terms of biological role, binds 16S rRNA, required for the assembly of 30S particles and may also be responsible for determining the conformation of the 16S rRNA at the A site. This Baumannia cicadellinicola subsp. Homalodisca coagulata protein is Small ribosomal subunit protein uS14.